The following is a 186-amino-acid chain: Large ribosomal subunit protein uL10 (186 aa).

Belongs to the universal ribosomal protein uL10 family. As to quaternary structure, part of the ribosomal stalk of the 50S ribosomal subunit. The N-terminus interacts with L11 and the large rRNA to form the base of the stalk. The C-terminus forms an elongated spine to which L12 dimers bind in a sequential fashion forming a multimeric L10(L12)X complex.

Forms part of the ribosomal stalk, playing a central role in the interaction of the ribosome with GTP-bound translation factors. This chain is Large ribosomal subunit protein uL10 (rplJ), found in Streptomyces virginiae (Streptomyces cinnamonensis).